Reading from the N-terminus, the 271-residue chain is Probable ribosomal RNA small subunit methyltransferase A (271 aa).

Residues Asn22, Leu24, Gly49, Glu70, Asp97, and Asn112 each contribute to the S-adenosyl-L-methionine site.

The protein belongs to the class I-like SAM-binding methyltransferase superfamily. rRNA adenine N(6)-methyltransferase family. RsmA subfamily.

It localises to the cytoplasm. Its function is as follows. Specifically dimethylates two adjacent adenosines in the loop of a conserved hairpin near the 3'-end of 16S rRNA in the 30S particle. May play a critical role in biogenesis of 30S subunits. The polypeptide is Probable ribosomal RNA small subunit methyltransferase A (Methanosphaera stadtmanae (strain ATCC 43021 / DSM 3091 / JCM 11832 / MCB-3)).